Consider the following 89-residue polypeptide: Long neurotoxin homolog NTL2 (89 aa).

The N-terminal stretch at 1-21 (MKTLLLSLVVVIIVCLDLGYT) is a signal peptide. Intrachain disulfides connect Cys24/Cys45, Cys27/Cys32, Cys38/Cys66, Cys70/Cys81, and Cys82/Cys87. The Cell attachment site signature appears at 54–56 (RGD).

This sequence belongs to the three-finger toxin family. Ancestral subfamily. Orphan group V sub-subfamily. As to expression, expressed by the venom gland.

It localises to the secreted. Its function is as follows. Exhibits M2 muscarinic acetylcholine receptor (CHRM2)-blocking activity, but has a weak binding activity toward nicotinic AChR. Moreover, it inhibits collagen-induced platelet aggregation. The protein is Long neurotoxin homolog NTL2 of Bungarus multicinctus (Many-banded krait).